Here is a 375-residue protein sequence, read N- to C-terminus: Coproporphyrin III ferrochelatase (375 aa).

The Fe-coproporphyrin III site is built by Ser-59 and Tyr-128. His-191 and Glu-286 together coordinate Fe(2+).

It belongs to the ferrochelatase family.

It is found in the cytoplasm. It catalyses the reaction Fe-coproporphyrin III + 2 H(+) = coproporphyrin III + Fe(2+). The protein operates within porphyrin-containing compound metabolism; protoheme biosynthesis. Functionally, involved in coproporphyrin-dependent heme b biosynthesis. Catalyzes the insertion of ferrous iron into coproporphyrin III to form Fe-coproporphyrin III. This chain is Coproporphyrin III ferrochelatase, found in Streptomyces coelicolor (strain ATCC BAA-471 / A3(2) / M145).